The chain runs to 106 residues: YcgL domain-containing protein HCH_02617 (106 aa).

One can recognise a YcgL domain in the interval 6-90 (RLISIFRSSK…VQDDYMMDVV (85 aa)).

The sequence is that of YcgL domain-containing protein HCH_02617 from Hahella chejuensis (strain KCTC 2396).